The chain runs to 357 residues: Transcription factor PCF6 (357 aa).

Residues 1 to 29 form a disordered region; sequence MEAAVGDGEGGGGGGGRGKRGRGGGGGEM. A compositionally biased stretch (gly residues) spans 7-16; that stretch reads DGEGGGGGGG. The region spanning 52–110 is the TCP domain; the sequence is GKDRHSKVYTAKGIRDRRVRLSVATAIQFYDLQDRLGFDQPSKAIEWLINAASPAIDTL. Disordered regions lie at residues 125–162 and 281–307; these read AADA…DKEV and ANRG…QQLQ. 2 stretches are compositionally biased toward polar residues: residues 142 to 155 and 284 to 295; these read LSNK…SETS and GTLQSNSPSNMS.

Forms homodimers and heterodimers.

It is found in the nucleus. Functionally, transcription activator. Binds the promoter core sequence 5'-GGNCC-3'. The sequence is that of Transcription factor PCF6 (PCF6) from Oryza sativa subsp. japonica (Rice).